Reading from the N-terminus, the 288-residue chain is Protease HtpX homolog (288 aa).

2 helical membrane passes run 7 to 27 (TAVLMAAITALFIVVGGMLGG) and 29 to 49 (QGMLMALLMAVGMNFFSYWFS). Histidine 131 provides a ligand contact to Zn(2+). Glutamate 132 is an active-site residue. Position 135 (histidine 135) interacts with Zn(2+). A run of 2 helical transmembrane segments spans residues 141 to 161 (ILISAVAATMAGAISALANFA) and 177 to 197 (IASLMVAILAPIAASLIQMSI). Glutamate 202 lines the Zn(2+) pocket.

The protein belongs to the peptidase M48B family. The cofactor is Zn(2+).

Its subcellular location is the cell inner membrane. This Polynucleobacter necessarius subsp. necessarius (strain STIR1) protein is Protease HtpX homolog.